Reading from the N-terminus, the 1013-residue chain is Prominin-like protein (1013 aa).

The chain crosses the membrane as a helical span at residues 32–52 (IAYLAICGLSVAIFGFALATL). Residues Asn99 and Asn116 are each glycosylated (N-linked (GlcNAc...) asparagine). 3 helical membrane-spanning segments follow: residues 215 to 235 (CGIC…IAFV), 489 to 509 (VVSL…IFAL), and 535 to 555 (LLLA…VGLF). 4 N-linked (GlcNAc...) asparagine glycosylation sites follow: Asn576, Asn618, Asn803, and Asn824. The helical transmembrane segment at 852–872 (INGFWVGILLCALLFLPILFV) threads the bilayer. The tract at residues 918-1013 (ANVPKKRRKA…YYYPGASEQD (96 aa)) is disordered. N-linked (GlcNAc...) asparagine glycosylation is present at Asn949. The span at 950–963 (RSGGDRGGGGGDGA) shows a compositional bias: gly residues.

The protein belongs to the prominin family.

It localises to the membrane. The chain is Prominin-like protein from Drosophila melanogaster (Fruit fly).